Reading from the N-terminus, the 127-residue chain is Glycine cleavage system H protein 1 (127 aa).

One can recognise a Lipoyl-binding domain in the interval 20–101 (SVTVGITPYA…LGAGWFFRFI (82 aa)). Residue Lys60 is modified to N6-lipoyllysine.

It belongs to the GcvH family. The glycine cleavage system is composed of four proteins: P, T, L and H. The cofactor is (R)-lipoate.

Its function is as follows. The glycine cleavage system catalyzes the degradation of glycine. The H protein shuttles the methylamine group of glycine from the P protein to the T protein. This chain is Glycine cleavage system H protein 1, found in Pseudomonas syringae pv. tomato (strain ATCC BAA-871 / DC3000).